A 115-amino-acid polypeptide reads, in one-letter code: Probable 4-amino-4-deoxy-L-arabinose-phosphoundecaprenol flippase subunit ArnE (115 aa).

3 consecutive transmembrane segments (helical) span residues 42 to 62 (PWPW…LLLL), 65 to 85 (VEVG…TLAA), and 93 to 112 (VDRR…VLLG). In terms of domain architecture, EamA spans 46-113 (LALLALGLGL…IVAGVVLLGR (68 aa)).

The protein belongs to the ArnE family. As to quaternary structure, heterodimer of ArnE and ArnF.

The protein resides in the cell inner membrane. It functions in the pathway bacterial outer membrane biogenesis; lipopolysaccharide biosynthesis. In terms of biological role, translocates 4-amino-4-deoxy-L-arabinose-phosphoundecaprenol (alpha-L-Ara4N-phosphoundecaprenol) from the cytoplasmic to the periplasmic side of the inner membrane. This chain is Probable 4-amino-4-deoxy-L-arabinose-phosphoundecaprenol flippase subunit ArnE, found in Pseudomonas aeruginosa (strain UCBPP-PA14).